An 862-amino-acid chain; its full sequence is DNA mismatch repair protein MutS (862 aa).

608–615 (GPNMAGKS) serves as a coordination point for ATP.

This sequence belongs to the DNA mismatch repair MutS family.

In terms of biological role, this protein is involved in the repair of mismatches in DNA. It is possible that it carries out the mismatch recognition step. This protein has a weak ATPase activity. This chain is DNA mismatch repair protein MutS, found in Borrelia garinii subsp. bavariensis (strain ATCC BAA-2496 / DSM 23469 / PBi) (Borreliella bavariensis).